The sequence spans 405 residues: MVEKVRNIVVEELVRTPVEMQEVELVERKGIGHPDSIADGIAEAVSRALSREYLKRYGIILHHNTDQVEVVGGRAYPQFGGGEVIKPIYILLSGRAVELVDREEFPVHQVAIKAAKDYLKKAVRHLDIENHVVIDSRIGQGSVDLVGVFNKAKENPIPLANDTSFGVGYAPLSETERIVLETEKLLNSEEFKKKCPAVGEDIKVMGLRKGDEIDLTIAAAIVDSEVSNPDDYMAVKEEIYEAAKGVVEEHTQRPTKIFVNTADDPKNGIYYITVTGTSAEAGDDGSVGRGNRVNGLITPNRHMSMEAAAGKNPVSHVGKIYNLLSMLIANDIAEQVEGVQEVYVRILSQIGKPIDEPLVASIQIIPKKGYSIDVLQKPAYEIADAWLADVTKIQKMILDDKLNVF.

139–144 (GQGSVD) serves as a coordination point for ATP.

Belongs to the AdoMet synthase 2 family. Requires Mg(2+) as cofactor.

It carries out the reaction L-methionine + ATP + H2O = S-adenosyl-L-methionine + phosphate + diphosphate. The protein operates within amino-acid biosynthesis; S-adenosyl-L-methionine biosynthesis; S-adenosyl-L-methionine from L-methionine: step 1/1. In terms of biological role, catalyzes the formation of S-adenosylmethionine from methionine and ATP. The polypeptide is S-adenosylmethionine synthase (Thermococcus gammatolerans (strain DSM 15229 / JCM 11827 / EJ3)).